Consider the following 376-residue polypeptide: WD repeat-containing protein 86 (376 aa).

WD repeat units follow at residues 13-52, 55-94, 95-132, 135-188, 191-232, 234-272, 274-310, and 313-350; these read DHRGGINWLSLSPDGQRLLTGSEDGTARLWSTADGQCCAL, GHESYVTFCQLEDEAAFTCSADCTIRRWDVLTGQCLQVYR, GHTSIVNRILVANNQLFSSSYDRTARVWSVDKGQMSRE, GHRN…CHQT, GHTG…RVFR, HRGSVICLELVNRLVYSGSADRTVKCWLADTGECVRTFT, HRRNVSALKYHAGTLFTGSGDACARAFDAQSGELRRV, and GHTFIINCIQVHGQVLYTASHDGALRLWDVRGLRGAPR.

The protein is WD repeat-containing protein 86 (WDR86) of Homo sapiens (Human).